We begin with the raw amino-acid sequence, 807 residues long: cAMP-regulated phosphoprotein 21 (807 aa).

Residues 1–127 (MSEQGGLTPT…KNREKLSERP (127 aa)) form a disordered region. An N-acetylserine modification is found at Ser2. Ser32 carries the post-translational modification Phosphoserine. Positions 32-57 (SLDEEEKLELQRRLAAQNQERRKSKS) form a coiled coil. Ser55 bears the Phosphoserine; by PKA mark. Polar residues predominate over residues 89–98 (IHLQLSSFPS). The span at 101-127 (EEDKSRKDDSEREKEKDKNREKLSERP) shows a compositional bias: basic and acidic residues. A Phosphoserine modification is found at Ser133. An R3H domain is found at 163-226 (RMILLKMEQE…SVIINKTSST (64 aa)). Residues 227–298 (RIPEQRFCEH…VRERIFAHDS (72 aa)) enclose the SUZ domain. Residues 245-282 (SQKRFILKRDNSSIDKEDNQNRMHPFRDDRRSKSIEER) are disordered. Residues Asn265 and Ser298 each carry the phosphoserine modification. 4 disordered regions span residues 328-434 (LFRA…TSSV), 474-536 (GSIL…QPQM), 552-576 (SQLS…YPAS), and 595-627 (QLST…QQPP). The segment covering 337–348 (GRTSGSRQSSSE) has biased composition (low complexity). A compositionally biased stretch (basic and acidic residues) spans 349–358 (TELRWPDHQR). A compositionally biased stretch (polar residues) spans 359-380 (AWSSTDSDSSNRNLKPTMTKTA). Residues Ser361 and Ser381 each carry the phosphoserine modification. Positions 401–421 (GKLSKTGSESSSSAGSSGSLS) are enriched in low complexity. Positions 422–434 (RTHPQSTALTSSV) are enriched in polar residues. Positions 514 to 524 (QQPPQQQPSPQ) are enriched in pro residues. Residues 525-535 (PQQQVQASQPQ) show a composition bias toward low complexity. Composition is skewed to polar residues over residues 552-563 (SQLSMSRQSSGD) and 595-613 (QLST…QQVL). At Ser557 the chain carries Phosphoserine. At Arg650 the chain carries Asymmetric dimethylarginine.

In terms of assembly, interacts with CALM1. Post-translationally, phosphorylation of isoform 2 at Ser-55 is enhanced upon dopamine D1 receptor activation and favors interaction with CALM1. Methylated by CARM1 at Arg-650 in immature thymocytes. Present at high levels in thymus and low levels in brain. In thymus, isoform 1 is specifically found in immature thymocytes (at protein level).

The protein resides in the cytoplasm. Its function is as follows. May act as a competitive inhibitor of calmodulin-dependent enzymes such as calcineurin in neurons. The polypeptide is cAMP-regulated phosphoprotein 21 (Arpp21) (Mus musculus (Mouse)).